A 470-amino-acid polypeptide reads, in one-letter code: Nuclear receptor subfamily 0 group B member 1 (470 aa).

3 tandem repeats follow at residues 1 to 67 (MAGE…YRCC), 68 to 133 (FCGK…YRCC), and 134 to 200 (FCGE…YRCC). Residues 1–253 (MAGENHQWQG…RPVALKSPQV (253 aa)) are 4 X 67 AA tandem repeats. 3 short sequence motifs (LXXLL motif) span residues 13 to 17 (LYNML), 80 to 84 (LYSML), and 146 to 150 (LYSLL). The 4; truncated repeat unit spans residues 201–253 (FCGEDHPQQGSTLYCVPTSTNQAQAAPEERPRAPWWDTSSGALRPVALKSPQV). The NR LBD domain occupies 205–469 (DHPQQGSTLY…DMMLEMLCTK (265 aa)). Positions 461-466 (MMLEML) match the AF-2 motif motif.

Belongs to the nuclear hormone receptor family. NR0 subfamily. As to quaternary structure, homodimer. Interacts with NR5A1, NR5A2, NR0B2 and with COPS2. Interacts with ESRRB; represses ESRRB activity at the GATA6 promoter.

Its subcellular location is the nucleus. The protein localises to the cytoplasm. Functionally, nuclear receptor that lacks a DNA-binding domain and acts as a corepressor that inhibits the transcriptional activity of other nuclear receptors through heterodimeric interactions. Component of a cascade required for the development of the hypothalamic-pituitary-adrenal-gonadal axis. May also have a role in the development of the embryo and in the maintenance of embryonic stem cell pluripotency. The protein is Nuclear receptor subfamily 0 group B member 1 (NR0B1) of Homo sapiens (Human).